Consider the following 522-residue polypeptide: Gypsy retrotransposon integrase-like protein 1 (522 aa).

An Integrase catalytic domain is found at 135–292; sequence KVENPWSLVT…TPYFQMFSRN (158 aa). A Phosphoserine modification is found at Ser502.

In Pongo abelii (Sumatran orangutan), this protein is Gypsy retrotransposon integrase-like protein 1 (GIN1).